We begin with the raw amino-acid sequence, 120 residues long: Phosphoribosyl-AMP cyclohydrolase (120 aa).

Aspartate 75 is a Mg(2+) binding site. Cysteine 76 contributes to the Zn(2+) binding site. Aspartate 77 and aspartate 79 together coordinate Mg(2+). The Zn(2+) site is built by cysteine 92 and cysteine 99.

Belongs to the PRA-CH family. Homodimer. Mg(2+) serves as cofactor. Requires Zn(2+) as cofactor.

It localises to the cytoplasm. It catalyses the reaction 1-(5-phospho-beta-D-ribosyl)-5'-AMP + H2O = 1-(5-phospho-beta-D-ribosyl)-5-[(5-phospho-beta-D-ribosylamino)methylideneamino]imidazole-4-carboxamide. The protein operates within amino-acid biosynthesis; L-histidine biosynthesis; L-histidine from 5-phospho-alpha-D-ribose 1-diphosphate: step 3/9. Its function is as follows. Catalyzes the hydrolysis of the adenine ring of phosphoribosyl-AMP. In Methanosarcina mazei (strain ATCC BAA-159 / DSM 3647 / Goe1 / Go1 / JCM 11833 / OCM 88) (Methanosarcina frisia), this protein is Phosphoribosyl-AMP cyclohydrolase.